Reading from the N-terminus, the 201-residue chain is 3-isopropylmalate dehydratase small subunit (201 aa).

This sequence belongs to the LeuD family. LeuD type 1 subfamily. Heterodimer of LeuC and LeuD.

The enzyme catalyses (2R,3S)-3-isopropylmalate = (2S)-2-isopropylmalate. It participates in amino-acid biosynthesis; L-leucine biosynthesis; L-leucine from 3-methyl-2-oxobutanoate: step 2/4. In terms of biological role, catalyzes the isomerization between 2-isopropylmalate and 3-isopropylmalate, via the formation of 2-isopropylmaleate. The sequence is that of 3-isopropylmalate dehydratase small subunit from Brucella abortus (strain S19).